A 219-amino-acid polypeptide reads, in one-letter code: Ribosomal RNA large subunit methyltransferase E (219 aa).

S-adenosyl-L-methionine contacts are provided by glycine 60, tryptophan 62, aspartate 85, aspartate 101, and aspartate 126. Lysine 166 functions as the Proton acceptor in the catalytic mechanism.

Belongs to the class I-like SAM-binding methyltransferase superfamily. RNA methyltransferase RlmE family.

Its subcellular location is the cytoplasm. It carries out the reaction uridine(2552) in 23S rRNA + S-adenosyl-L-methionine = 2'-O-methyluridine(2552) in 23S rRNA + S-adenosyl-L-homocysteine + H(+). Its function is as follows. Specifically methylates the uridine in position 2552 of 23S rRNA at the 2'-O position of the ribose in the fully assembled 50S ribosomal subunit. This chain is Ribosomal RNA large subunit methyltransferase E, found in Bordetella avium (strain 197N).